Reading from the N-terminus, the 1269-residue chain is Protein cramped-like (1269 aa).

A compositionally biased stretch (gly residues) spans 1 to 12 (MTVKLGDGGSGE). The disordered stretch occupies residues 1-165 (MTVKLGDGGS…GKKVRRQWES (165 aa)). 2 stretches are compositionally biased toward basic and acidic residues: residues 13-24 (DGLKKLGKRAAD) and 43-52 (SGTKRDEKTP). Over residues 59 to 74 (PPAPPGAPQAPSPPQG) the composition is skewed to pro residues. A compositionally biased stretch (gly residues) spans 105–123 (GNAGGSGPRGKGAEGGGSS). Residues 124 to 147 (SGNVSGVAPAAPAGGSRSSSRNLG) are compositionally biased toward low complexity. A compositionally biased stretch (basic and acidic residues) spans 151 to 165 (GEKEEGKKVRRQWES). Residues 161 to 224 (RQWESWSTED…FYYRTWHKIT (64 aa)) form the SANT domain. Ser-307 is modified (phosphoserine). Disordered stretches follow at residues 450–541 (IQSG…PGAL), 581–666 (DTRP…EVPA), 757–827 (VRPA…NDSD), 976–1034 (EGLS…DSFQ), 1055–1092 (IPLS…SQGE), and 1115–1157 (VPLS…PSDS). A compositionally biased stretch (low complexity) spans 485–507 (SSGESSPESAPGEGAALSLSSPD). Composition is skewed to basic and acidic residues over residues 508–518 (APDRPPPRHQD) and 526–535 (TPAEGRDSPT). Polar residues-rich tracts occupy residues 757–767 (VRPAQEEQSMT), 774–806 (TVSS…SSGL), and 982–1002 (SPLS…TGTH). Composition is skewed to low complexity over residues 1055–1070 (IPLS…LSPP) and 1125–1140 (SDSS…SPQP). A Phosphoserine modification is found at Ser-1268.

It belongs to the cramped family.

It is found in the nucleus. The chain is Protein cramped-like from Homo sapiens (Human).